The following is a 151-amino-acid chain: MARINYSINGDPETTSKAMGSELHISPKKSREVCCKIKGMKASEARKFLEDVIAMKQAVPFKKHHDGSGHRKGPMAAGKYPISASKEILKVLKNAESNAEYKGLEPANMYIIHAAIQRGRVIHGFMPRARGRATPKDTETVNIEMILSEVR.

The span at 1–18 shows a compositional bias: polar residues; sequence MARINYSINGDPETTSKA. The disordered stretch occupies residues 1–23; it reads MARINYSINGDPETTSKAMGSEL.

Belongs to the universal ribosomal protein uL22 family. Part of the 50S ribosomal subunit.

Its function is as follows. This protein binds specifically to 23S rRNA. It makes multiple contacts with different domains of the 23S rRNA in the assembled 50S subunit and ribosome. The globular domain of the protein is located near the polypeptide exit tunnel on the outside of the subunit, while an extended beta-hairpin is found that lines the wall of the exit tunnel in the center of the 70S ribosome. In Methanosarcina acetivorans (strain ATCC 35395 / DSM 2834 / JCM 12185 / C2A), this protein is Large ribosomal subunit protein uL22.